Consider the following 360-residue polypeptide: MKPSIVAKLEALHERHEEVQALLGDAGIIADQDRFRALSREYAQLSDVSRCFTDWQQVQDDIETAQMMLDDPEMREMAQEELREAKEKSEQLEQQLQVLLLPKDPDDERNAFLEVRAGTGGDEAALFAGDLFRMYSRYAEARRWRVEIMSMSEGEHGGYKEIIAKISGEGVYGRLKFESGGHRVQRVPATESQGRIHTSACTVAVMPELPEAELPDINPADLRIDTFRSSGAGGQHVNTTDSAIRITHLPTGIVVECQDERSQHKNKAKALSVLGARIHAAETAKRQQAEASTRRNLLGSGDRSDRNRTYNFPQGRVTDHRINLTLYRLDETMEGKLDMLIEPIVQEHQADLLAALSEQE.

At Q235 the chain carries N5-methylglutamine. The tract at residues 284–313 (AKRQQAEASTRRNLLGSGDRSDRNRTYNFP) is disordered.

The protein belongs to the prokaryotic/mitochondrial release factor family. Post-translationally, methylated by PrmC. Methylation increases the termination efficiency of RF1.

The protein localises to the cytoplasm. Functionally, peptide chain release factor 1 directs the termination of translation in response to the peptide chain termination codons UAG and UAA. The sequence is that of Peptide chain release factor 1 from Salmonella arizonae (strain ATCC BAA-731 / CDC346-86 / RSK2980).